The following is a 240-amino-acid chain: MSQGLQQQNNDHLVQSDDPEHPANLIPELCRKFYNWGWVTGTGGGTSIRRGEHIFIAPSGVQKELMQPHNIFVLQYPTPKYPPSERKYIRKPLDLKPSACTPLFLAAFERGAGCCIHTHSQWAVLVTLLVEREKGPEGCFEISNIEQIKGIPKGPGKGMLGYFDTLRIPIIDNTAFEEDLTGSLEKAMDAYPDTYAVLVRRHGIYVWGDNVAKAKTQCESLDYLFQLAVEMHKLGIPWVK.

Substrate is bound at residue Cys-100. His-117 and His-119 together coordinate Zn(2+). Glu-146 functions as the Proton donor/acceptor in the catalytic mechanism. Residue His-202 participates in Zn(2+) binding.

This sequence belongs to the aldolase class II family. MtnB subfamily. The cofactor is Zn(2+).

It is found in the cytoplasm. It carries out the reaction 5-(methylsulfanyl)-D-ribulose 1-phosphate = 5-methylsulfanyl-2,3-dioxopentyl phosphate + H2O. It participates in amino-acid biosynthesis; L-methionine biosynthesis via salvage pathway; L-methionine from S-methyl-5-thio-alpha-D-ribose 1-phosphate: step 2/6. Its function is as follows. Catalyzes the dehydration of methylthioribulose-1-phosphate (MTRu-1-P) into 2,3-diketo-5-methylthiopentyl-1-phosphate (DK-MTP-1-P). In Emericella nidulans (strain FGSC A4 / ATCC 38163 / CBS 112.46 / NRRL 194 / M139) (Aspergillus nidulans), this protein is Methylthioribulose-1-phosphate dehydratase.